Consider the following 464-residue polypeptide: Hydrogen cyanide synthase subunit HcnB (464 aa).

In terms of assembly, heterotrimer of HcnA, HcnB and HcnC.

The protein localises to the cell membrane. It carries out the reaction glycine + 2 A = hydrogen cyanide + 2 AH2 + CO2. Its activity is regulated as follows. Oxygen is necessary for cyanogenesis. Activated by succinate, glycine methyl ester, glucose and D,L-methionine in addition to glycine. Phenazine methosulfate, methylene blue, 2,6-dichlorophenolindophenol (DCIP) and ferricyanide can replace oxygen for the reaction. Inhibited by pyrrolnitrin and acriflavine at 1 mM concentration. Functionally, a three-component membrane-bound flavoenzyme that catalyzes the formation of hydrogen cyanide, a secondary metabolite, by transfer of electrons to a cyanide-resistant branch of the aerobic respiratory chain. The chain is Hydrogen cyanide synthase subunit HcnB from Pseudomonas aeruginosa (strain ATCC 15692 / DSM 22644 / CIP 104116 / JCM 14847 / LMG 12228 / 1C / PRS 101 / PAO1).